A 295-amino-acid polypeptide reads, in one-letter code: Iodotyrosine deiodinase (295 aa).

The chain crosses the membrane as a helical span at residues 3–23 (VFSSLTPVFVAVLCVIIGFLF). Positions 29–81 (KESRSKQKPSDQTARPWVDEDLQDDTEISTKDNEENNEDWMDTTDEENLPHVP) are disordered. The span at 63–75 (ENNEDWMDTTDEE) shows a compositional bias: acidic residues. FMN contacts are provided by residues 106–110 (RRSVR), S134, and 134–135 (SG). The 3-iodo-L-tyrosine site is built by A136, E163, Y167, and K188. FMN is bound by residues 243-245 (TTT) and R285.

Belongs to the nitroreductase family. The cofactor is FMN.

Its subcellular location is the membrane. It catalyses the reaction 2 iodide + L-tyrosine + 2 NADP(+) = 3,5-diiodo-L-tyrosine + 2 NADPH + H(+). It carries out the reaction iodide + L-tyrosine + NADP(+) = 3-iodo-L-tyrosine + NADPH. The enzyme catalyses 3-iodo-L-tyrosine + iodide + NADP(+) = 3,5-diiodo-L-tyrosine + NADPH + H(+). The catalysed reaction is L-tyrosine + chloride + NADP(+) = 3-chloro-L-tyrosine + NADPH. It catalyses the reaction bromide + L-tyrosine + NADP(+) = 3-bromo-L-tyrosine + NADPH. In terms of biological role, catalyzes the dehalogenation of halotyrosines such as 3,5-diiodo-L-tyrosine. Likely to also catalyze the dehalogenation of other halotyrosines such as 3-bromo-L-tyrosine, 3-chloro-L-tyrosine and 3-iodo-L-tyrosine. The chain is Iodotyrosine deiodinase (iyd) from Danio rerio (Zebrafish).